The primary structure comprises 401 residues: Carboxybiotin decarboxylase (401 aa).

Transmembrane regions (helical) follow at residues 20–40 (VISI…YFGF), 46–66 (PLIM…VLFL), 70–90 (VVGT…VNLM), 107–127 (LIAC…FILI), 131–151 (ASII…IIGI), 173–193 (MVLF…AIIA), 244–264 (LCLL…GIAI), 275–295 (LLET…LGAL), 306–326 (ISLI…GGVL), and 380–400 (VCGL…LFLL).

The protein resides in the cell membrane. It carries out the reaction N(6)-carboxybiotinyl-L-lysyl-[protein] + n Na(+)(in) + H(+) = N(6)-biotinyl-L-lysyl-[protein] + n Na(+)(out) + CO2. Its function is as follows. Beta subunit of the biotin-dependent malonate decarboxylase multienzyme complex (EC 7.2.4.4). Acts as an integral membrane-bound carboxybiotin protein decarboxylase by releasing the carboxyl group of the carboxylated biotin carrier MADF. The free energy of the decarboxylation reaction is used to pump Na(+) out of the cell. The polypeptide is Carboxybiotin decarboxylase (madB) (Malonomonas rubra).